The chain runs to 497 residues: Zinc finger protein ZIC 2-B (497 aa).

2 disordered regions span residues 58-107 (HMGA…TSQA) and 143-180 (SAAA…PQGH). Gly residues predominate over residues 66–88 (PGGGSGGGSGGGGGAGPNGGAGA). The segment covering 97 to 107 (PGQTSAFTSQA) has biased composition (polar residues). Positions 161 to 171 (LHHHPHHHHQL) are enriched in basic residues. The C2H2-type 1; atypical zinc-finger motif lies at 273 to 308 (LICKWIDPEQLNNPKKSCNKTFSTMHELVTHMSVEH). Residues 317–344 (HICFWEECAREGKPFKAKYKLVNHIRVH) form a C2H2-type 2; atypical zinc finger. C2H2-type zinc fingers lie at residues 350–374 (FPCP…KRTH), 380–404 (FQCE…MHVH), and 410–432 (YLCK…MKVH). A disordered region spans residues 423–473 (SSLRKHMKVHESSPQGSESSPAASSGYESSTPPGLVSPNSETQNPNLSPAA). The span at 434 to 452 (SSPQGSESSPAASSGYESS) shows a compositional bias: low complexity. Polar residues predominate over residues 459-469 (SPNSETQNPNL).

The protein belongs to the GLI C2H2-type zinc-finger protein family.

It is found in the nucleus. The protein resides in the cytoplasm. In terms of biological role, transcriptional repressor that inhibits neurogenesis and induces neural and neural crest differentiation. Regulates anteroposterior patterning in early development by inhibiting expression of the nodal genes through the inhibition of vegt. Required for gastrulation movements and for proper anterior neural and axial development. May also act as a transcriptional activator. May bind to the minimal GLI-consensus sequence 5'-TGGGTGGTC-3'. The polypeptide is Zinc finger protein ZIC 2-B (zic2-b) (Xenopus laevis (African clawed frog)).